The sequence spans 951 residues: Valine--tRNA ligase (951 aa).

The 'HIGH' region motif lies at 42–52; it reads PNVTGSLHMGH. The short motif at 554 to 558 is the 'KMSKS' region element; that stretch reads KMSKS. An ATP-binding site is contributed by lysine 557. Residues 882–944 adopt a coiled-coil conformation; that stretch reads LINKDDELAR…AEAKAKLIEQ (63 aa).

The protein belongs to the class-I aminoacyl-tRNA synthetase family. ValS type 1 subfamily. In terms of assembly, monomer.

The protein localises to the cytoplasm. The catalysed reaction is tRNA(Val) + L-valine + ATP = L-valyl-tRNA(Val) + AMP + diphosphate. Functionally, catalyzes the attachment of valine to tRNA(Val). As ValRS can inadvertently accommodate and process structurally similar amino acids such as threonine, to avoid such errors, it has a 'posttransfer' editing activity that hydrolyzes mischarged Thr-tRNA(Val) in a tRNA-dependent manner. The polypeptide is Valine--tRNA ligase (Salmonella choleraesuis (strain SC-B67)).